The sequence spans 30 residues: Trypsin inhibitor 1 (30 aa).

3 disulfide bridges follow: Cys4-Cys21, Cys11-Cys23, and Cys17-Cys29.

The protein belongs to the protease inhibitor I7 (squash-type serine protease inhibitor) family.

Its subcellular location is the secreted. In terms of biological role, inhibits trypsin. This chain is Trypsin inhibitor 1, found in Citrullus lanatus (Watermelon).